The following is a 131-amino-acid chain: Leptin receptor gene-related protein (131 aa).

4 helical membrane passes run 7–27 (LVAL…GCAL), 32–52 (VYWP…YFIA), 69–89 (LAYF…VVLA), and 100–120 (GLVL…FLVF).

This sequence belongs to the OB-RGRP/VPS55 family. Interacts with LEPR. Interacts with RAB13. In terms of tissue distribution, widely distributed in the brain, with elevated expression in the hypothalamic regions, including the paraventricular nucleus. In the placenta, present at high levels in the junctional zone situated towards the maternal aspect and throughout the labyrinth zone in close proximity to the developing fetus.

Its subcellular location is the golgi apparatus membrane. The protein localises to the endosome membrane. Functionally, negatively regulates leptin receptor (LEPR) cell surface expression, and thus decreases response to leptin. Negatively regulates growth hormone (GH) receptor cell surface expression in liver. May play a role in liver resistance to GH during periods of reduced nutrient availability. The protein is Leptin receptor gene-related protein (Leprot) of Mus musculus (Mouse).